Here is a 423-residue protein sequence, read N- to C-terminus: COP9 signalosome complex subunit 3 (423 aa).

Ala2 is subject to N-acetylalanine. The region spanning 197–365 is the PCI domain; the sequence is NFERALYFYE…GMVSFHDNPE (169 aa). The interval 402-423 is disordered; sequence QFVQKSMGSQEDDSGNKPSSYS. Residues Ser407, Ser410, and Ser423 each carry the phosphoserine modification.

The protein belongs to the CSN3 family. Component of the CSN complex, composed of COPS1/GPS1, COPS2, COPS3, COPS4, COPS5, COPS6, COPS7 (COPS7A or COPS7B), COPS8 and COPS9 isoform 1. In the complex, it probably interacts directly with COPS1, COPS4, COPS8 and COPS9 isoform 1. Interacts with CK2 and PKD. Interacts with the translation initiation factor EIF3S6 and IKBKG. Interacts with ERCC6. As to expression, widely expressed. Expressed at high level in heart and skeletal muscle.

The protein resides in the cytoplasm. It localises to the nucleus. Functionally, component of the COP9 signalosome complex (CSN), a complex involved in various cellular and developmental processes. The CSN complex is an essential regulator of the ubiquitin (Ubl) conjugation pathway by mediating the deneddylation of the cullin subunits of SCF-type E3 ligase complexes, leading to decrease the Ubl ligase activity of SCF-type complexes such as SCF, CSA or DDB2. The complex is also involved in phosphorylation of p53/TP53, c-jun/JUN, IkappaBalpha/NFKBIA, ITPK1 and IRF8/ICSBP, possibly via its association with CK2 and PKD kinases. CSN-dependent phosphorylation of TP53 and JUN promotes and protects degradation by the Ubl system, respectively. The sequence is that of COP9 signalosome complex subunit 3 (COPS3) from Homo sapiens (Human).